We begin with the raw amino-acid sequence, 330 residues long: MAILAFQKPDKVLMLEADAKFGKFEFRPLEPGFGITVGNALRRILLSSLEGFAITTIRIEGVEHEFSSVPGVKEDVTNIILNLKQVRFKQVVEEFESEKVSITIENSSEFKAGDIGKYLTGFEVLNPELVICHLDSKATMQIDITINKGRGYVPADENREYCTDVNVIPIDSIYTPIRNVKYAVENFRVEQKTDYEKLVLEITTDGSIHPKEALKEAAKILIYHFMLFSDEKITLESNDVDGNEEFDEEVLHMRQLLKTKLVDMDLSVRALNCLKAADVETLGDLVQFNKTDLLKFRNFGKKSLTELDDLLESLNLSFGTDISKYKLDKE.

An alpha N-terminal domain (alpha-NTD) region spans residues 1–232; it reads MAILAFQKPD…YHFMLFSDEK (232 aa). Residues 248–330 are alpha C-terminal domain (alpha-CTD); sequence EEVLHMRQLL…DISKYKLDKE (83 aa).

The protein belongs to the RNA polymerase alpha chain family. As to quaternary structure, homodimer. The RNAP catalytic core consists of 2 alpha, 1 beta, 1 beta' and 1 omega subunit. When a sigma factor is associated with the core the holoenzyme is formed, which can initiate transcription.

It carries out the reaction RNA(n) + a ribonucleoside 5'-triphosphate = RNA(n+1) + diphosphate. Functionally, DNA-dependent RNA polymerase catalyzes the transcription of DNA into RNA using the four ribonucleoside triphosphates as substrates. This chain is DNA-directed RNA polymerase subunit alpha, found in Bacteroides fragilis (strain ATCC 25285 / DSM 2151 / CCUG 4856 / JCM 11019 / LMG 10263 / NCTC 9343 / Onslow / VPI 2553 / EN-2).